A 177-amino-acid polypeptide reads, in one-letter code: Translation initiation factor IF-3 (177 aa).

This sequence belongs to the IF-3 family. In terms of assembly, monomer.

The protein localises to the cytoplasm. IF-3 binds to the 30S ribosomal subunit and shifts the equilibrium between 70S ribosomes and their 50S and 30S subunits in favor of the free subunits, thus enhancing the availability of 30S subunits on which protein synthesis initiation begins. This Rhizobium meliloti (strain 1021) (Ensifer meliloti) protein is Translation initiation factor IF-3.